The primary structure comprises 469 residues: F-box only protein 3 (469 aa).

An F-box domain is found at 10-56; sequence PLTLESLPTDPLLLILSFLDYRDLINCCYVSRRLSQLSSHDPLWRRH. In terms of domain architecture, ApaG spans 278–408; the sequence is VATTGDITVS…FHMACPTFRV (131 aa). Over residues 419–449 the composition is skewed to acidic residues; that stretch reads EYEEMEEEEEEEEEEDDDDSADMDESDDDEE. The segment at 419 to 454 is disordered; sequence EYEEMEEEEEEEEEEDDDDSADMDESDDDEEERQRR.

As to quaternary structure, part of a SCF (SKP1-cullin-F-box) protein ligase complex SCF(FBXO3) consisting of FBXO3, SKP1, CUL1 and RBX1. Interacts with PML, interaction is direct and takes place either alone or within the SCF complex.

It is found in the nucleus. The protein operates within protein modification; protein ubiquitination. Functionally, substrate recognition component of the SCF (SKP1-CUL1-F-box protein)-type E3 ubiquitin ligase complex, SCF(FBXO3), which mediates the ubiquitination and subsequent proteasomal degradation of target proteins. Mediates the ubiquitination of HIPK2 and probably that of EP300, leading to rapid degradation by the proteasome. In the presence of PML, HIPK2 ubiquitination still occurs, but degradation is prevented. PML, HIPK2 and FBXO3 may act synergically to activate p53/TP53-dependent transactivation. The SCF(FBXO3) also acts as a regulator of inflammation by mediating ubiquitination and degradation of FBXL2 in response to lipopolysaccharide (LPS). The SCF(FBXO3) complex specifically recognizes FBXL2 phosphorylated at 'Thr-404' and promotes its ubiquitination. This Bos taurus (Bovine) protein is F-box only protein 3 (FBXO3).